A 423-amino-acid chain; its full sequence is UDP-N-acetylglucosamine 1-carboxyvinyltransferase 2 (423 aa).

23–24 (KN) provides a ligand contact to phosphoenolpyruvate. Arg93 contributes to the UDP-N-acetyl-alpha-D-glucosamine binding site. Cys117 functions as the Proton donor in the catalytic mechanism. 2-(S-cysteinyl)pyruvic acid O-phosphothioketal is present on Cys117. UDP-N-acetyl-alpha-D-glucosamine is bound by residues 122–126 (RPIDQ), Asp305, and Ile327.

It belongs to the EPSP synthase family. MurA subfamily.

The protein localises to the cytoplasm. It catalyses the reaction phosphoenolpyruvate + UDP-N-acetyl-alpha-D-glucosamine = UDP-N-acetyl-3-O-(1-carboxyvinyl)-alpha-D-glucosamine + phosphate. It participates in cell wall biogenesis; peptidoglycan biosynthesis. Cell wall formation. Adds enolpyruvyl to UDP-N-acetylglucosamine. The polypeptide is UDP-N-acetylglucosamine 1-carboxyvinyltransferase 2 (Listeria monocytogenes serotype 4b (strain F2365)).